A 244-amino-acid chain; its full sequence is Phosphoadenosine 5'-phosphosulfate reductase (244 aa).

C239 serves as the catalytic Nucleophile; cysteine thiosulfonate intermediate.

Belongs to the PAPS reductase family. CysH subfamily.

Its subcellular location is the cytoplasm. It carries out the reaction [thioredoxin]-disulfide + sulfite + adenosine 3',5'-bisphosphate + 2 H(+) = [thioredoxin]-dithiol + 3'-phosphoadenylyl sulfate. It functions in the pathway sulfur metabolism; hydrogen sulfide biosynthesis; sulfite from sulfate: step 3/3. Functionally, catalyzes the formation of sulfite from phosphoadenosine 5'-phosphosulfate (PAPS) using thioredoxin as an electron donor. This is Phosphoadenosine 5'-phosphosulfate reductase from Salmonella schwarzengrund (strain CVM19633).